The primary structure comprises 352 residues: Strictosidine synthase (352 aa).

The signal sequence occupies residues 1-31 (MANFSESKSMMAVFFMFFLLLLSSSSSSSSS). N-linked (GlcNAc...) asparagine glycosylation is found at Asn-95 and Asn-187.

The protein belongs to the strictosidine synthase family. Monomer.

Its subcellular location is the vacuole. The enzyme catalyses 3alpha(S)-strictosidine + H2O = secologanin + tryptamine. Its pathway is alkaloid biosynthesis; 3alpha(S)-strictosidine biosynthesis; 3alpha(S)-strictosidine from secologanin and tryptamine: step 1/1. Functionally, catalyzes the stereospecific condensation of tryptamine with secologanin to form strictosidine, the key intermediate of indole alkaloid biosynthesis. In Catharanthus roseus (Madagascar periwinkle), this protein is Strictosidine synthase (STR1).